Here is a 201-residue protein sequence, read N- to C-terminus: Large ribosomal subunit protein uL4 (201 aa).

A disordered region spans residues 45–71; it reads AQKTRAEVTGSGKKPWRQKGTGRARAG.

Belongs to the universal ribosomal protein uL4 family. As to quaternary structure, part of the 50S ribosomal subunit.

Functionally, one of the primary rRNA binding proteins, this protein initially binds near the 5'-end of the 23S rRNA. It is important during the early stages of 50S assembly. It makes multiple contacts with different domains of the 23S rRNA in the assembled 50S subunit and ribosome. Forms part of the polypeptide exit tunnel. This Shewanella pealeana (strain ATCC 700345 / ANG-SQ1) protein is Large ribosomal subunit protein uL4.